A 158-amino-acid polypeptide reads, in one-letter code: 6,7-dimethyl-8-ribityllumazine synthase (158 aa).

5-amino-6-(D-ribitylamino)uracil is bound by residues Phe22, 57-59 (AVE), and 81-83 (AVI). Position 86–87 (86–87 (GT)) interacts with (2S)-2-hydroxy-3-oxobutyl phosphate. His89 serves as the catalytic Proton donor. Phe114 contacts 5-amino-6-(D-ribitylamino)uracil. A (2S)-2-hydroxy-3-oxobutyl phosphate-binding site is contributed by Arg128.

The protein belongs to the DMRL synthase family. As to quaternary structure, forms an icosahedral capsid composed of 60 subunits, arranged as a dodecamer of pentamers.

It catalyses the reaction (2S)-2-hydroxy-3-oxobutyl phosphate + 5-amino-6-(D-ribitylamino)uracil = 6,7-dimethyl-8-(1-D-ribityl)lumazine + phosphate + 2 H2O + H(+). The protein operates within cofactor biosynthesis; riboflavin biosynthesis; riboflavin from 2-hydroxy-3-oxobutyl phosphate and 5-amino-6-(D-ribitylamino)uracil: step 1/2. Catalyzes the formation of 6,7-dimethyl-8-ribityllumazine by condensation of 5-amino-6-(D-ribitylamino)uracil with 3,4-dihydroxy-2-butanone 4-phosphate. This is the penultimate step in the biosynthesis of riboflavin. This chain is 6,7-dimethyl-8-ribityllumazine synthase, found in Shewanella pealeana (strain ATCC 700345 / ANG-SQ1).